A 124-amino-acid polypeptide reads, in one-letter code: Large ribosomal subunit protein eL33 (124 aa).

A2 is subject to N-acetylalanine.

It belongs to the eukaryotic ribosomal protein eL33 family.

This is Large ribosomal subunit protein eL33 from Caenorhabditis elegans.